A 473-amino-acid chain; its full sequence is Chaperone SurA (473 aa).

The first 36 residues, 1–36, serve as a signal peptide directing secretion; that stretch reads MTNDRLFAGIARVLSVRPLAAALALLLTLPLIGVQA. 2 consecutive PpiC domains span residues 214-315 and 326-425; these read SLAL…KVIE and ITQT…QVLE.

Its subcellular location is the periplasm. It catalyses the reaction [protein]-peptidylproline (omega=180) = [protein]-peptidylproline (omega=0). Chaperone involved in the correct folding and assembly of outer membrane proteins. Recognizes specific patterns of aromatic residues and the orientation of their side chains, which are found more frequently in integral outer membrane proteins. May act in both early periplasmic and late outer membrane-associated steps of protein maturation. This chain is Chaperone SurA, found in Polaromonas sp. (strain JS666 / ATCC BAA-500).